Here is a 738-residue protein sequence, read N- to C-terminus: Melanotransferrin (738 aa).

The N-terminal stretch at 1 to 19 is a signal peptide; the sequence is MRLLSVTFWLLLSLRTVVC. Transferrin-like domains follow at residues 23 to 357 and 366 to 706; these read VQWC…GLLC and LRWC…GMLS. 2 disulfides stabilise this stretch: cysteine 26–cysteine 63 and cysteine 36–cysteine 54. Positions 78 and 107 each coordinate Fe(3+). The N-linked (GlcNAc...) asparagine glycan is linked to asparagine 118. 4 cysteine pairs are disulfide-bonded: cysteine 130–cysteine 216, cysteine 172–cysteine 189, cysteine 186–cysteine 199, and cysteine 257–cysteine 271. Hydrogencarbonate is bound at residue threonine 132. A glycan (N-linked (GlcNAc...) asparagine) is linked at asparagine 135. Residues arginine 136, valine 138, and glycine 139 each coordinate hydrogencarbonate. Tyrosine 210 contacts Fe(3+). Positions 279 and 451 each coordinate Fe(3+). Serine 462 bears the Phosphoserine mark. An N-linked (GlcNAc...) asparagine glycan is attached at asparagine 515. The Fe(3+) site is built by tyrosine 556 and histidine 625. Residue cysteine 709 is the site of GPI-anchor amidated cysteine attachment. Residues 710 to 738 constitute a propeptide, removed in mature form; the sequence is SGAGAAVQRVPLLALLLLTLAAGLLPRVL.

Belongs to the transferrin family.

The protein resides in the cell membrane. In terms of biological role, involved in iron cellular uptake. Seems to be internalized and then recycled back to the cell membrane. Binds a single atom of iron per subunit. Could also bind zinc. The polypeptide is Melanotransferrin (Meltf) (Mus musculus (Mouse)).